The chain runs to 610 residues: MCGIVGAVAQRDVADILVDGLHRLEYRGYDSAGVAVLNEQHHMQIIRRVGKVKALEEAVIGEKVFGGTGIAHTRWATHGEPSEINAHPHRSGKIAVVHNGIIENYEALKVVLQQRGYIFASHTDTEVIAHLVEWELRTAHSLLEAVQKAVVQLRGAYGTVVMNQDDPTRLVVARSGSPLVIGYGIGENFIASDPLALLSVTHRFAYLEEGDVAEITRHAVAIYNQAGEAVTREIHQGNFEQDAADKGVYRHYMQKEIFEQPIAIMNTLAGRIKDGQVNIEAIAPNAADILAKVEHIQIVACGTSYNAGMVARYWFEEIANISCNVEIASEFRYRKFVVQPNSLLITLSQSGETADTLAALRLAKQSGYMAAMTICNVASSSLVRESDFAFMTKAGIEIGVASTKAFTTQLTCLLLLNVAIGRLKGRLSVAQEQQIVQSLQKLPSQIESALVFDKAIEKLSEDFADKQHTLFLGRGEFYPIAMESALKLKEISYIHAEAYAAGELKHGPLALIDSEMPVVVVAPENDLLEKVKSNIEEVRARGGQLYVFADHEAGFEQTVDFKTIVLPRVDAVTAPIFYTVPLQLLSYHIALIKGTDVDQPRNLAKAVTVE.

Cysteine 2 acts as the Nucleophile; for GATase activity in catalysis. Residues 2-218 (CGIVGAVAQR…EGDVAEITRH (217 aa)) form the Glutamine amidotransferase type-2 domain. SIS domains are found at residues 286–426 (AADI…LKGR) and 459–600 (LSED…VDQP). The active-site For Fru-6P isomerization activity is the lysine 605.

In terms of assembly, homodimer.

It is found in the cytoplasm. The enzyme catalyses D-fructose 6-phosphate + L-glutamine = D-glucosamine 6-phosphate + L-glutamate. In terms of biological role, catalyzes the first step in hexosamine metabolism, converting fructose-6P into glucosamine-6P using glutamine as a nitrogen source. This Haemophilus ducreyi (strain 35000HP / ATCC 700724) protein is Glutamine--fructose-6-phosphate aminotransferase [isomerizing].